The sequence spans 88 residues: DNA-directed RNA polymerase subunit omega (88 aa).

It belongs to the RNA polymerase subunit omega family. As to quaternary structure, the RNAP catalytic core consists of 2 alpha, 1 beta, 1 beta' and 1 omega subunit. When a sigma factor is associated with the core the holoenzyme is formed, which can initiate transcription.

The enzyme catalyses RNA(n) + a ribonucleoside 5'-triphosphate = RNA(n+1) + diphosphate. In terms of biological role, promotes RNA polymerase assembly. Latches the N- and C-terminal regions of the beta' subunit thereby facilitating its interaction with the beta and alpha subunits. The chain is DNA-directed RNA polymerase subunit omega from Haemophilus influenzae (strain PittEE).